The sequence spans 151 residues: Leukocyte cell-derived chemotaxin-2 (151 aa).

A signal peptide spans 1-18 (MFSTKALLLAGLISTALA). 3 cysteine pairs are disulfide-bonded: C25-C60, C36-C41, and C99-C142. The Zn(2+) site is built by H53, D57, and H138.

It belongs to the LECT2/MIM-1 family. Interacts with MET. In terms of tissue distribution, highly expressed in adult and fetal liver and weakly in testis. Not expressed in bone marrow.

The protein localises to the cytoplasm. It is found in the secreted. In terms of biological role, has a neutrophil chemotactic activity. Also a positive regulator of chondrocyte proliferation. Does not show metalloendopeptidase activity. This is Leukocyte cell-derived chemotaxin-2 (LECT2) from Homo sapiens (Human).